Consider the following 530-residue polypeptide: Type II methyltransferase M.MjaII (530 aa).

Belongs to the N(4)/N(6)-methyltransferase family. N(4) subfamily.

It catalyses the reaction a 2'-deoxycytidine in DNA + S-adenosyl-L-methionine = an N(4)-methyl-2'-deoxycytidine in DNA + S-adenosyl-L-homocysteine + H(+). Functionally, an alpha subtype methylase that recognizes the double-stranded sequence 5'-GGNCC-3', methylates C-5 on both strands, and protects the DNA from cleavage by the MjaII endonuclease. This is Type II methyltransferase M.MjaII (mjaIIM) from Methanocaldococcus jannaschii (strain ATCC 43067 / DSM 2661 / JAL-1 / JCM 10045 / NBRC 100440) (Methanococcus jannaschii).